Here is a 736-residue protein sequence, read N- to C-terminus: Elongation factor 2 (736 aa).

The tr-type G domain occupies 18-262; that stretch reads TRVRNIGIIA…AVIKFVPNPV (245 aa). Residues 27-34, 93-97, and 147-150 contribute to the GTP site; these read AHVDHGKT, DTPGH, and NKVD. At H603 the chain carries Diphthamide.

It belongs to the TRAFAC class translation factor GTPase superfamily. Classic translation factor GTPase family. EF-G/EF-2 subfamily.

Its subcellular location is the cytoplasm. In terms of biological role, catalyzes the GTP-dependent ribosomal translocation step during translation elongation. During this step, the ribosome changes from the pre-translocational (PRE) to the post-translocational (POST) state as the newly formed A-site-bound peptidyl-tRNA and P-site-bound deacylated tRNA move to the P and E sites, respectively. Catalyzes the coordinated movement of the two tRNA molecules, the mRNA and conformational changes in the ribosome. The protein is Elongation factor 2 of Metallosphaera sedula (strain ATCC 51363 / DSM 5348 / JCM 9185 / NBRC 15509 / TH2).